The following is a 33-amino-acid chain: DELTA-pseudomyrmecitoxin-Pp1a subunit B (33 aa).

In terms of assembly, heterodimer composed of subunit A and subunit B (DELTA-PSDTX-Pp1a); disulfide-linked. Expressed by the venom gland.

It is found in the secreted. This heterodimer has insecticidal and cytotoxic properties. Induces immediate paralysis when injected into blowflies (Lucilia cuprina), and then death within 24 hours. Also inhibits the growth of Aedes albopictus mosquito C6/36 cells. This chain is DELTA-pseudomyrmecitoxin-Pp1a subunit B, found in Pseudomyrmex penetrator (Ant).